Consider the following 276-residue polypeptide: Large ribosomal subunit protein uL2 (276 aa).

Residues 221–276 (RGSAMNPNDHPHGGGEGRAPIGRKSPMTPWGKKARGVKTRDRKKASNALIIRRRTK) form a disordered region. Residues 252–276 (KKARGVKTRDRKKASNALIIRRRTK) are compositionally biased toward basic residues.

The protein belongs to the universal ribosomal protein uL2 family. In terms of assembly, part of the 50S ribosomal subunit. Forms a bridge to the 30S subunit in the 70S ribosome.

Functionally, one of the primary rRNA binding proteins. Required for association of the 30S and 50S subunits to form the 70S ribosome, for tRNA binding and peptide bond formation. It has been suggested to have peptidyltransferase activity; this is somewhat controversial. Makes several contacts with the 16S rRNA in the 70S ribosome. In Onion yellows phytoplasma (strain OY-M), this protein is Large ribosomal subunit protein uL2.